The primary structure comprises 217 residues: Probable lipoprotein CPn_0875/CP_0994/CPj0875/CpB0904 (217 aa).

The signal sequence occupies residues 1-21 (MKRVIYKTIFCGLTLLTSLSS). The N-palmitoyl cysteine moiety is linked to residue Cys-22. Residue Cys-22 is the site of S-diacylglycerol cysteine attachment.

Belongs to the chlamydial CPn_0875/CT_734/TC_0107 family.

It localises to the cell membrane. The polypeptide is Probable lipoprotein CPn_0875/CP_0994/CPj0875/CpB0904 (Chlamydia pneumoniae (Chlamydophila pneumoniae)).